The chain runs to 301 residues: Glycine--tRNA ligase alpha subunit (301 aa).

This sequence belongs to the class-II aminoacyl-tRNA synthetase family. In terms of assembly, tetramer of two alpha and two beta subunits.

The protein resides in the cytoplasm. The enzyme catalyses tRNA(Gly) + glycine + ATP = glycyl-tRNA(Gly) + AMP + diphosphate. The polypeptide is Glycine--tRNA ligase alpha subunit (Pseudoalteromonas atlantica (strain T6c / ATCC BAA-1087)).